The following is a 429-amino-acid chain: GDP-fucose protein O-fucosyltransferase 2 (429 aa).

The first 21 residues, 1–21 (MATLSFVFLLLGAVSWPPASA), serve as a signal peptide directing secretion. GDP-beta-L-fucose is bound at residue 53 to 57 (PEGFN). Residue Glu-54 is the Proton acceptor of the active site. A disulfide bridge links Cys-161 with Cys-192. Residues Asn-189, Asn-209, and Asn-259 are each glycosylated (N-linked (GlcNAc...) asparagine). Residues 292–294 (HLR), Asp-371, and 388–389 (TF) each bind GDP-beta-L-fucose. Residues Cys-412 and Cys-419 are joined by a disulfide bond.

Belongs to the glycosyltransferase 68 family.

It localises to the endoplasmic reticulum. The protein resides in the golgi apparatus. It carries out the reaction L-seryl-[protein] + GDP-beta-L-fucose = 3-O-(alpha-L-fucosyl)-L-seryl-[protein] + GDP + H(+). The catalysed reaction is L-threonyl-[protein] + GDP-beta-L-fucose = 3-O-(alpha-L-fucosyl)-L-threonyl-[protein] + GDP + H(+). The protein operates within protein modification; protein glycosylation. In terms of biological role, catalyzes the reaction that attaches fucose through an O-glycosidic linkage to a conserved serine or threonine residue in the consensus sequence C1-X-X-S/T-C2 of thrombospondin type I repeats (TSRs) where C1 and C2 are the first and second cysteines of the repeat, respectively. O-fucosylates members of several protein families including the ADAMTS, the thrombospondin (TSP) and spondin families. Required for the proper secretion of ADAMTS family members such as ADAMTSL1 and ADAMTS13. The O-fucosylation of TSRs is also required for restricting epithelial to mesenchymal transition (EMT), maintaining the correct patterning of mesoderm and localization of the definite endoderm. The sequence is that of GDP-fucose protein O-fucosyltransferase 2 (POFUT2) from Pan troglodytes (Chimpanzee).